The following is a 1078-amino-acid chain: Cell wall acid trehalase ATC1 (1078 aa).

Residues 1 to 54 (MAANSSFFLADNCAPHNQSFIQFCIHAASKKKGRIALMCLANLFLLFSFHLLYA) form the signal peptide. N-linked (GlcNAc...) asparagine glycosylation is found at Asn4, Asn17, Asn150, Asn184, Asn242, Asn287, Asn301, and Asn350. Residue 478–479 (WD) participates in substrate binding. Asn532, Asn591, and Asn601 each carry an N-linked (GlcNAc...) asparagine glycan. Glu607 acts as the Proton donor in catalysis. Asn661 and Asn670 each carry an N-linked (GlcNAc...) asparagine glycan. 676–677 (KQ) lines the substrate pocket. 8 N-linked (GlcNAc...) asparagine glycosylation sites follow: Asn829, Asn837, Asn904, Asn922, Asn931, Asn946, Asn1003, and Asn1037.

It belongs to the glycosyl hydrolase 65 family.

The protein resides in the secreted. It localises to the cell wall. It carries out the reaction alpha,alpha-trehalose + H2O = alpha-D-glucose + beta-D-glucose. Functionally, cell wall acid trehalase that catalyzes hydrolysis of the disaccharide trehalose and required for growth on trehalose as carbon source. Plays a role in dimorphic conversion and virulence. This chain is Cell wall acid trehalase ATC1 (ATC1), found in Candida albicans (strain SC5314 / ATCC MYA-2876) (Yeast).